Consider the following 498-residue polypeptide: MRINPTTSGPGVSTLGRKNLGRIAQIIGPVLDVAFPPGKMPNIYNALVVKGRDTVGQQINVTCEVQQLLGNNRVRAVAMSATDGLMRGMEVIDTGAPLSVPVGGATLGRIFNVLGEPVDNLGPVDTRTTSPIHRSAPAFIQLDTKLSIFETGIKVVDLLAPYRRGGKIGLFGGAGVGKTVLIMELINNIAKAHGGVSVFGGVGERTREGNDLYMEMKESGVINEQNIAESKVALVYGQMNEPPGARMRVGLTALTMAEYFRDVNEQDVLLFIDNIFRFVQAGSEVSALLGRMPSAVGYQPTLSTEMGSLQERITSTKEGSITSIQAVYVPADDLTDPAPATTFAHLDATTVLSRGLAAKGIYPAVDPLDSTSTMLQPRIVGEEHYETAQRVKQTSQRYKELQDIIAILGLDELSEEDRLTVARARKIERFLSQPFFVAEVFTGSPGKYVGLAETIRGFQLILSGELDGLPEQAFYLVGNIDEATAKAMNFEVESKLKK.

172-179 is a binding site for ATP; that stretch reads GGAGVGKT.

Belongs to the ATPase alpha/beta chains family. F-type ATPases have 2 components, CF(1) - the catalytic core - and CF(0) - the membrane proton channel. CF(1) has five subunits: alpha(3), beta(3), gamma(1), delta(1), epsilon(1). CF(0) has four main subunits: a(1), b(1), b'(1) and c(9-12).

The protein resides in the plastid. It localises to the chloroplast thylakoid membrane. It catalyses the reaction ATP + H2O + 4 H(+)(in) = ADP + phosphate + 5 H(+)(out). Produces ATP from ADP in the presence of a proton gradient across the membrane. The catalytic sites are hosted primarily by the beta subunits. In Galbulimima belgraveana (Northern pigeonberry ash), this protein is ATP synthase subunit beta, chloroplastic.